Reading from the N-terminus, the 97-residue chain is UPF0235 protein Daro_3887 (97 aa).

It belongs to the UPF0235 family.

The protein is UPF0235 protein Daro_3887 of Dechloromonas aromatica (strain RCB).